A 386-amino-acid polypeptide reads, in one-letter code: GLABROUS1 enhancer-binding protein-like 1 (386 aa).

Disordered stretches follow at residues 1–58 (MVTP…KKKK) and 197–314 (ESGE…DDDD). The span at 216–226 (EEIRDNDETAR) shows a compositional bias: basic and acidic residues. Positions 221–285 (NDETARKAQQ…LKEHEEVANT (65 aa)) form a coiled coil. Polar residues predominate over residues 257-267 (DNNGTTQIAQQ). A compositionally biased stretch (low complexity) spans 291–300 (NGAAKTTENG). Residues 354 to 375 (LSDEWKALCVEERRLNIKKLRF) form a non-canonical leucine-zipper region.

Belongs to the GeBP family. In terms of assembly, homo- and heterodimers. Interacts with GEBP, GPL2 and GPL3. Interacts with GEBP. In terms of tissue distribution, expressed in the apical meristem and young leaf primordia. Detected in the vascular tissues of cotyledons and leaves, in hydathodes and at the base of flowers and siliques, but not in roots.

It localises to the nucleus. Its function is as follows. Probable transcription factor. May play redundant roles with GEBP and GPL2 in cytokinin responses by regulating the transcript levels of type-A ARR response genes. Involved in stress responses. Plays a repressive role in cell expansion by counteracting the positive role of CPR5 in this process, but does not regulate cell proliferation or endoreduplication. This Arabidopsis thaliana (Mouse-ear cress) protein is GLABROUS1 enhancer-binding protein-like 1.